We begin with the raw amino-acid sequence, 456 residues long: Proline-specific permease ProY (456 aa).

The Cytoplasmic segment spans residues 1-17 (MESNNKLKRGLSTRHIR). Transmembrane regions (helical) follow at residues 18 to 38 (FMALGSAIGTGLFYGSADAIK) and 39 to 59 (MAGPSVLLAYIIGGVAAYIIM). Over 60 to 95 (RALGEMSVHNPAASSFSRYAQENLGPLAGYITGWTY) the chain is Cytoplasmic. 2 helical membrane-spanning segments follow: residues 96–116 (CFEILIVAIADVTAFGIYMGV) and 117–137 (WFPAVPHWIWVLSVVLIICAI). The Cytoplasmic segment spans residues 138 to 156 (NLMSVKVFGELEFWFSFFK). Residues 157-177 (VATIIIMIVAGIGIIVWGIGN) form a helical membrane-spanning segment. The Periplasmic portion of the chain corresponds to 178-197 (GGQPTGIHNLWSNGGFFSNG). A helical transmembrane segment spans residues 198-218 (WLGMIMSLQMVMFAYGGIEII). Residues 219-242 (GITAGEAKDPEKSIPRAINSVPMR) are Cytoplasmic-facing. Residues 243-263 (ILVFYVGTLFVIMSIYPWNQV) traverse the membrane as a helical segment. The Periplasmic portion of the chain corresponds to 264–277 (GTNGSPFVLTFQHM). The helical transmembrane segment at 278–298 (GITFAASILNFVVLTASLSAI) threads the bilayer. The Cytoplasmic segment spans residues 299–331 (NSDVFGVGRMLHGMAEQGSAPKVFAKTSRRGIP). Residues 332–352 (WVTVLVMTIALLFAVYLNYIM) traverse the membrane as a helical segment. The Periplasmic segment spans residues 353 to 355 (PEN). Residues 356–376 (VFLVIASLATFATVWVWIMIL) form a helical membrane-spanning segment. The Cytoplasmic portion of the chain corresponds to 377 to 399 (LSQIAFRRRLPPEEVKALKFKVP). A helical membrane pass occupies residues 400–420 (GGVVTTIAGLIFLVFIIALIG). The Periplasmic portion of the chain corresponds to 421 to 424 (YHPD). The helical transmembrane segment at 425–445 (TRISLYVGFAWIVLLLIGWIF) threads the bilayer. Residues 446–456 (KRRRDRQLAQA) lie on the Cytoplasmic side of the membrane.

It belongs to the amino acid-polyamine-organocation (APC) superfamily. Amino acid transporter (AAT) (TC 2.A.3.1) family.

Its subcellular location is the cell inner membrane. Permease that is involved in the transport across the cytoplasmic membrane of proline. The protein is Proline-specific permease ProY (proY) of Salmonella typhimurium (strain LT2 / SGSC1412 / ATCC 700720).